The primary structure comprises 721 residues: Fatty acid oxidation complex subunit alpha (721 aa).

The interval 1–190 (MIYEGKAITV…KVGVVDAIVA (190 aa)) is enoyl-CoA hydratase/isomerase. Residue D297 coordinates substrate. The 3-hydroxyacyl-CoA dehydrogenase stretch occupies residues 312 to 721 (RDVKQAAVLG…SFFGQASSEV (410 aa)). NAD(+)-binding positions include M325, D344, 401 to 403 (VVE), K408, and S430. H451 functions as the For 3-hydroxyacyl-CoA dehydrogenase activity in the catalytic mechanism. N454 contacts NAD(+). Positions 501 and 660 each coordinate substrate.

This sequence in the N-terminal section; belongs to the enoyl-CoA hydratase/isomerase family. It in the C-terminal section; belongs to the 3-hydroxyacyl-CoA dehydrogenase family. In terms of assembly, heterotetramer of two alpha chains (FadB) and two beta chains (FadA).

The catalysed reaction is a (3S)-3-hydroxyacyl-CoA + NAD(+) = a 3-oxoacyl-CoA + NADH + H(+). It carries out the reaction a (3S)-3-hydroxyacyl-CoA = a (2E)-enoyl-CoA + H2O. It catalyses the reaction a 4-saturated-(3S)-3-hydroxyacyl-CoA = a (3E)-enoyl-CoA + H2O. The enzyme catalyses (3S)-3-hydroxybutanoyl-CoA = (3R)-3-hydroxybutanoyl-CoA. The catalysed reaction is a (3Z)-enoyl-CoA = a 4-saturated (2E)-enoyl-CoA. It carries out the reaction a (3E)-enoyl-CoA = a 4-saturated (2E)-enoyl-CoA. It functions in the pathway lipid metabolism; fatty acid beta-oxidation. In terms of biological role, involved in the aerobic and anaerobic degradation of long-chain fatty acids via beta-oxidation cycle. Catalyzes the formation of 3-oxoacyl-CoA from enoyl-CoA via L-3-hydroxyacyl-CoA. It can also use D-3-hydroxyacyl-CoA and cis-3-enoyl-CoA as substrate. This is Fatty acid oxidation complex subunit alpha from Pseudomonas syringae pv. tomato (strain ATCC BAA-871 / DC3000).